Consider the following 629-residue polypeptide: tRNA uridine 5-carboxymethylaminomethyl modification enzyme MnmG (629 aa).

14 to 19 lines the FAD pocket; it reads GAGHAG. Residue 274-288 coordinates NAD(+); the sequence is GPRYCPSIEDKVVRF.

The protein belongs to the MnmG family. As to quaternary structure, homodimer. Heterotetramer of two MnmE and two MnmG subunits. The cofactor is FAD.

It is found in the cytoplasm. In terms of biological role, NAD-binding protein involved in the addition of a carboxymethylaminomethyl (cmnm) group at the wobble position (U34) of certain tRNAs, forming tRNA-cmnm(5)s(2)U34. In Xylella fastidiosa (strain 9a5c), this protein is tRNA uridine 5-carboxymethylaminomethyl modification enzyme MnmG.